A 202-amino-acid polypeptide reads, in one-letter code: MSCVPWKGDKVKSESLELPQAAPPQIYHEKQRRELCALHALNNVFQDSNAFTRETLQEIFQRLSPNTMVTPHKKSMLGNGNYDVNVIMAALQTKGYEAVWWDKRRDVGAIALTNVMGFIMNLPSSLCWGPLKLPLKRQHWICVREVGGAYYNLDSKLKMPEWIGGKSELRKFLKHHLRGKNCELLLVVPEEVEAHQSWRADV.

Phosphoserine is present on Ser15. The 180-residue stretch at 23–202 (PPQIYHEKQR…EAHQSWRADV (180 aa)) folds into the Josephin domain. Cys36 functions as the Nucleophile in the catalytic mechanism. His139 functions as the Proton acceptor in the catalytic mechanism.

In terms of assembly, interacts with beta-actin/ACTB. Post-translationally, monoubiquitinated. Ubiquitination activates deubiquitination activity in vitro.

It localises to the cell membrane. Its subcellular location is the cytoplasm. It catalyses the reaction Thiol-dependent hydrolysis of ester, thioester, amide, peptide and isopeptide bonds formed by the C-terminal Gly of ubiquitin (a 76-residue protein attached to proteins as an intracellular targeting signal).. In terms of biological role, deubiquitinates monoubiquitinated probes (in vitro). When ubiquitinated, cleaves 'Lys-63'-linked and 'Lys-48'-linked poly-ubiquitin chains (in vitro), hence may act as a deubiquitinating enzyme. May increase macropinocytosis and suppress clathrin- and caveolae-mediated endocytosis. May enhance membrane dynamics and cell motility independently of its catalytic activity. The chain is Josephin-1 (JOSD1) from Bos taurus (Bovine).